The chain runs to 1003 residues: Glycine--tRNA ligase (1003 aa).

Positions 1–310 (MSSQPLTLQA…VTPKKIPTIC (310 aa)) are glycine--tRNA ligase alpha subunit. Positions 311-1003 (QPEDFLLEIG…CFGFYAWDVL (693 aa)) are glycine--tRNA ligase beta subunit.

It belongs to the class-II aminoacyl-tRNA synthetase family.

The protein resides in the cytoplasm. The catalysed reaction is tRNA(Gly) + glycine + ATP = glycyl-tRNA(Gly) + AMP + diphosphate. The sequence is that of Glycine--tRNA ligase (glyQS) from Chlamydia trachomatis serovar L2 (strain ATCC VR-902B / DSM 19102 / 434/Bu).